A 154-amino-acid chain; its full sequence is Transcriptional repressor NrdR (154 aa).

Residues 3–34 fold into a zinc finger; that stretch reads CPFCGANDTKVIDSRLVAEGEQVRRRRECLAC. Positions 49 to 139 constitute an ATP-cone domain; the sequence is PRLIKTDGSR…VYRRFQDLNE (91 aa).

Belongs to the NrdR family. The cofactor is Zn(2+).

Functionally, negatively regulates transcription of bacterial ribonucleotide reductase nrd genes and operons by binding to NrdR-boxes. This is Transcriptional repressor NrdR from Pseudomonas fluorescens (strain ATCC BAA-477 / NRRL B-23932 / Pf-5).